Here is a 1331-residue protein sequence, read N- to C-terminus: Contactin-associated protein-like 2 (1331 aa).

Residues 1–27 (MLAAPRAGCGAALLLWIVSSCLCRAWT) form the signal peptide. At 28 to 1262 (APSTSQKCDE…IRNGVNRNSA (1235 aa)) the chain is on the extracellular side. Residues 35-181 (CDEPLVSGLP…IGLRIEVYGC (147 aa)) enclose the F5/8 type C domain. An intrachain disulfide couples Cys-35 to Cys-181. Laminin G-like domains lie at 187 to 368 (VINF…SFSC) and 373 to 552 (TVPV…IDMC). N-linked (GlcNAc...) asparagine glycans are attached at residues Asn-289, Asn-346, Asn-363, Asn-379, Asn-436, Asn-506, Asn-507, and Asn-546. Cys-336 and Cys-368 are joined by a disulfide. Disulfide bonds link Cys-520–Cys-552, Cys-558–Cys-569, Cys-563–Cys-578, and Cys-580–Cys-590. An EGF-like 1 domain is found at 554–591 (IIDRCVPNHCERGGKCSQTWDSFKCTCDETGYTGATCH). Residues 592 to 798 (NSIYEPSCEA…LRCQGDRNYW (207 aa)) enclose the Fibrinogen C-terminal domain. N-linked (GlcNAc...) asparagine glycans are attached at residues Asn-630 and Asn-735. Residues 799–963 (NAASFPNPSS…KVTSGFISGC (165 aa)) form the Laminin G-like 3 domain. 4 disulfides stabilise this stretch: Cys-936/Cys-963, Cys-967/Cys-980, Cys-974/Cys-989, and Cys-991/Cys-1001. One can recognise an EGF-like 2 domain in the interval 964–1002 (SGHCTSYGTNCENGGKCLERYHGYSCDCSNTAYDGTFCN). Residues 1023–1214 (ATNARDSSSR…IQGELVESNC (192 aa)) enclose the Laminin G-like 4 domain. 2 N-linked (GlcNAc...) asparagine glycosylation sites follow: Asn-1116 and Asn-1198. A disulfide bridge connects residues Cys-1178 and Cys-1214. The chain crosses the membrane as a helical span at residues 1263–1283 (IIGGVIAVVIFTILCTLVFLI). Residues 1284-1331 (RYMFRHKGTYHTNEAKGAESAESADAAIMNNDPNFTETIDESKKEWLI) lie on the Cytoplasmic side of the membrane. Ser-1303 and Ser-1306 each carry phosphoserine.

Belongs to the neurexin family. Interacts (via C-terminus) with KCNA2.

The protein resides in the membrane. The protein localises to the cell projection. It is found in the axon. It localises to the cell junction. Its subcellular location is the paranodal septate junction. Functionally, required for gap junction formation. Required, with CNTNAP1, for radial and longitudinal organization of myelinated axons. Plays a role in the formation of functional distinct domains critical for saltatory conduction of nerve impulses in myelinated nerve fibers. Demarcates the juxtaparanodal region of the axo-glial junction. The sequence is that of Contactin-associated protein-like 2 (CNTNAP2) from Pongo abelii (Sumatran orangutan).